The sequence spans 551 residues: Palmdelphin (551 aa).

Position 1 is an N-acetylmethionine (M1). A coiled-coil region spans residues 12-106; the sequence is QAITDKRKIQ…LQISANEEVI (95 aa). A Glycyl lysine isopeptide (Lys-Gly) (interchain with G-Cter in SUMO2) cross-link involves residue K125. Phosphoserine occurs at positions 135 and 163. A Glycyl lysine isopeptide (Lys-Gly) (interchain with G-Cter in SUMO1); alternate cross-link involves residue K178. K178 participates in a covalent cross-link: Glycyl lysine isopeptide (Lys-Gly) (interchain with G-Cter in SUMO2); alternate. Over residues 247–258 the composition is skewed to basic and acidic residues; the sequence is ERNSKSPTEYHE. Residues 247-267 are disordered; sequence ERNSKSPTEYHEPVYANPFCR. The residue at position 270 (T270) is a Phosphothreonine. Disordered stretches follow at residues 298–387 and 452–536; these read HESE…CSSP and EDDE…DPSL. S322, S350, S371, S376, S385, and S386 each carry phosphoserine. Residues 484–495 show a composition bias toward basic and acidic residues; sequence KRSEVSPHENTN. S498, S515, and S520 each carry phosphoserine.

Belongs to the paralemmin family. As to quaternary structure, interacts with GLUL. Phosphorylated. Expressed in the brain and the spinal cord. Expressed in the anterior olfactory nucleus, the olfactory tubercle, the nucleus supraopticus, the nucleus of the lateral olfactory tract, the piriform cortex, the cortico-amygdaloid transition zone, the septofimbrial nucleus and the indusium griseum (at protein level).

The protein resides in the cytoplasm. It is found in the cell projection. It localises to the dendrite. The protein localises to the dendritic spine. This Rattus norvegicus (Rat) protein is Palmdelphin (Palmd).